The chain runs to 912 residues: Protein SLFN14 (912 aa).

The tract at residues 206–391 is required for endoribonuclease activity; sequence ESTHVEFKRF…KVHKFKEALQ (186 aa). The interval 392 to 571 is required for ribosome binding; the sequence is RHLFPVTQEE…QMGCEFFNLL (180 aa). 593-600 provides a ligand contact to ATP; the sequence is CFPGVRKT.

The protein belongs to the Schlafen family. Subgroup III subfamily. Associates with ribosomes in an ATP-independent manner. Requires Mg(2+) as cofactor. Mn(2+) serves as cofactor. In terms of tissue distribution, expressed in megakaryocytes and platelets (at protein level). Weakly expressed in melanocytes and malignant melanoma cells.

It localises to the nucleus. Shows no ribosome-associated and endoribonuclease activities. Its function is as follows. Displays polysome-associated endoribonuclease activity towards mRNAs and rRNAs. May play a role in RNA surveillance pathways by recognizing stalled ribosomes and triggering endonucleolytic cleavage of aberrant mRNAs. Cleaves different types of rRNAs and mRNAs in a magnesium- and manganese-dependent and ATP-independent manner. Involved in correct maturation of megakaryocytes and especially important for proplatelet extension. The chain is Protein SLFN14 from Homo sapiens (Human).